The primary structure comprises 226 residues: ATP synthase F(0) complex subunit a (226 aa).

6 helical membrane-spanning segments follow: residues Phe6 to Phe26, Trp68 to Leu88, Gln97 to Phe117, Ile138 to Val158, Ile164 to Ile184, and Phe193 to Val213.

This sequence belongs to the ATPase A chain family. Component of the ATP synthase complex composed at least of ATP5F1A/subunit alpha, ATP5F1B/subunit beta, ATP5MC1/subunit c (homooctomer), MT-ATP6/subunit a, MT-ATP8/subunit 8, ATP5ME/subunit e, ATP5MF/subunit f, ATP5MG/subunit g, ATP5MK/subunit k, ATP5MJ/subunit j, ATP5F1C/subunit gamma, ATP5F1D/subunit delta, ATP5F1E/subunit epsilon, ATP5PF/subunit F6, ATP5PB/subunit b, ATP5PD/subunit d, ATP5PO/subunit OSCP. ATP synthase complex consists of a soluble F(1) head domain (subunits alpha(3) and beta(3)) - the catalytic core - and a membrane F(0) domain - the membrane proton channel (subunits c, a, 8, e, f, g, k and j). These two domains are linked by a central stalk (subunits gamma, delta, and epsilon) rotating inside the F1 region and a stationary peripheral stalk (subunits F6, b, d, and OSCP). Interacts with DNAJC30; interaction is direct.

The protein localises to the mitochondrion inner membrane. The catalysed reaction is H(+)(in) = H(+)(out). In terms of biological role, subunit a, of the mitochondrial membrane ATP synthase complex (F(1)F(0) ATP synthase or Complex V) that produces ATP from ADP in the presence of a proton gradient across the membrane which is generated by electron transport complexes of the respiratory chain. ATP synthase complex consist of a soluble F(1) head domain - the catalytic core - and a membrane F(1) domain - the membrane proton channel. These two domains are linked by a central stalk rotating inside the F(1) region and a stationary peripheral stalk. During catalysis, ATP synthesis in the catalytic domain of F(1) is coupled via a rotary mechanism of the central stalk subunits to proton translocation. With the subunit c (ATP5MC1), forms the proton-conducting channel in the F(0) domain, that contains two crucial half-channels (inlet and outlet) that facilitate proton movement from the mitochondrial intermembrane space (IMS) into the matrix. Protons are taken up via the inlet half-channel and released through the outlet half-channel, following a Grotthuss mechanism. In Ornithorhynchus anatinus (Duckbill platypus), this protein is ATP synthase F(0) complex subunit a.